A 388-amino-acid chain; its full sequence is MRYLTAGESHGLSLTAIIEGIPAGLTLHPADIDHELQRRQGGYGRGARMSIETDRVQISSGVRHGKTTGAPITLTVINKDHQKWLDVMAVGDIEETLKLKRRVKHPRPGHADLVGGIKYHFNDLRDALERSSARETTMRVAVGAVAKRILAELGIDMLHHILIFGGITITIPSKLSFRELQERALHSELSIVNPKQEEEIKTYIDKIKKEGDTIGGIIETIVQGVPAGLGSYVQWDKKLDAKLAQAVLSINAFKGVEFGVGFDMGFQKGSQVMDEITWTPTQGYGRQTNHLGGFEGGMTTGQPLVVKGVMKPIPTLYKPLMSVDIDSHEPYKATVERSDPTALPAAGVIMENVVATVLAKEILETFSSTTMSELQKAFSDYRAYVKQF.

Residues Arg39 and Arg45 each contribute to the NADP(+) site. FMN-binding positions include 130 to 132, 251 to 252, Gly296, 311 to 315, and Arg337; these read RSS, NA, and KPIPT.

It belongs to the chorismate synthase family. Homotetramer. Requires FMNH2 as cofactor.

It catalyses the reaction 5-O-(1-carboxyvinyl)-3-phosphoshikimate = chorismate + phosphate. The protein operates within metabolic intermediate biosynthesis; chorismate biosynthesis; chorismate from D-erythrose 4-phosphate and phosphoenolpyruvate: step 7/7. Functionally, catalyzes the anti-1,4-elimination of the C-3 phosphate and the C-6 proR hydrogen from 5-enolpyruvylshikimate-3-phosphate (EPSP) to yield chorismate, which is the branch point compound that serves as the starting substrate for the three terminal pathways of aromatic amino acid biosynthesis. This reaction introduces a second double bond into the aromatic ring system. The protein is Chorismate synthase of Streptococcus pyogenes serotype M6 (strain ATCC BAA-946 / MGAS10394).